Reading from the N-terminus, the 501-residue chain is CaM kinase-like vesicle-associated protein (501 aa).

One can recognise a Protein kinase domain in the interval Tyr24 to Ile286. Positions Arg327–Ser501 are disordered. Positions Gln331–Ala365 are enriched in low complexity. The span at Thr387–Pro428 shows a compositional bias: polar residues. Thr435 bears the Phosphothreonine mark. The segment covering Thr438–Met451 has biased composition (polar residues). A Phosphothreonine modification is found at Thr459.

This sequence belongs to the protein kinase superfamily. CAMK Ser/Thr protein kinase family. In terms of assembly, interacts with calmodulin, in the presence of calcium. It depends on Ca(2+) as a cofactor.

The protein resides in the cell membrane. It localises to the cytoplasmic vesicle membrane. In terms of biological role, does not appear to have detectable kinase activity. This Homo sapiens (Human) protein is CaM kinase-like vesicle-associated protein (CAMKV).